Consider the following 210-residue polypeptide: Putative methyltransferase ECU09_1500 (210 aa).

Belongs to the methyltransferase superfamily.

In Encephalitozoon cuniculi (strain GB-M1) (Microsporidian parasite), this protein is Putative methyltransferase ECU09_1500.